The chain runs to 160 residues: Putative pre-16S rRNA nuclease (160 aa).

This sequence belongs to the YqgF nuclease family.

Its subcellular location is the cytoplasm. Functionally, could be a nuclease involved in processing of the 5'-end of pre-16S rRNA. This is Putative pre-16S rRNA nuclease from Rhodopseudomonas palustris (strain ATCC BAA-98 / CGA009).